Reading from the N-terminus, the 158-residue chain is MSEQNNTEMAFQIQRIYTKDISFEAPNAPQVFQQDWQPEVKLDLDTASSQLAEDVYEVVLRVTVTASLGEETAFLCEVQQGGIFSVAGIEGTQLAHCLGAYCPNILFPYARECITSLVSRGTFPQLNLAPVNFDALFMNYLQQQAEGEVEGVEQRQDA.

This sequence belongs to the SecB family. As to quaternary structure, homotetramer, a dimer of dimers. One homotetramer interacts with 1 SecA dimer.

The protein localises to the cytoplasm. Its function is as follows. One of the proteins required for the normal export of preproteins out of the cell cytoplasm. It is a molecular chaperone that binds to a subset of precursor proteins, maintaining them in a translocation-competent state. It also specifically binds to its receptor SecA. This Yersinia pestis (strain Pestoides F) protein is Protein-export protein SecB.